A 380-amino-acid polypeptide reads, in one-letter code: Acid phosphatase-like protein XcAP-3 (380 aa).

An N-terminal signal peptide occupies residues 1–19; the sequence is MKATILLFLVLAVVQLSTA. 3 disulfides stabilise this stretch: C147–C374, C167–C221, and C347–C351.

It belongs to the histidine acid phosphatase family.

The protein resides in the secreted. Probably modulates blood feeding of fleas on vertebrate species by binding and sequestering different mediators involved in the host response. Binds histamine. Binds leukotriene C4. Does not bind serotonin, adrenaline, noradrenaline, leukotriene B4, leukotriene D4, leukotriene E4, ADP, and stable analogs of thromboxane A2: U-46619 and cTXA2. The chain is Acid phosphatase-like protein XcAP-3 from Xenopsylla cheopis (Oriental rat flea).